A 61-amino-acid chain; its full sequence is Large ribosomal subunit protein uL30 (61 aa).

It belongs to the universal ribosomal protein uL30 family. As to quaternary structure, part of the 50S ribosomal subunit.

The polypeptide is Large ribosomal subunit protein uL30 (Frankia casuarinae (strain DSM 45818 / CECT 9043 / HFP020203 / CcI3)).